Reading from the N-terminus, the 338-residue chain is Formamidase (338 aa).

The CN hydrolase domain occupies 15-257; the sequence is VVIGLAQLAL…DEIVCCELRP (243 aa). The active-site Proton acceptor is Glu-61. Lys-130 serves as the catalytic Proton donor. Residue Cys-163 is the Nucleophile of the active site.

The protein belongs to the carbon-nitrogen hydrolase superfamily. Aliphatic amidase family.

It catalyses the reaction formamide + H2O = formate + NH4(+). Its function is as follows. Is an aliphatic amidase with a restricted substrate specificity, as it only hydrolyzes formamide. The protein is Formamidase of Pseudomonas syringae pv. tomato (strain ATCC BAA-871 / DC3000).